A 474-amino-acid polypeptide reads, in one-letter code: Coronin-1C (474 aa).

WD repeat units follow at residues 25 to 70 (DDIR…GRID), 78 to 118 (GHTG…LTLS), 128 to 168 (GHSK…ALIN), 172 to 202 (MHSD…RVID), 215 to 249 (AHEG…ALWN), and 263 to 303 (DTSN…PYVH). A coiled-coil region spans residues 436–474 (QNEAKLDEILKEIKSIKDTICNQDERISKLEQQMAKIAA). Lys446 bears the N6-acetyllysine mark.

This sequence belongs to the WD repeat coronin family. In terms of assembly, binds F-actin. Interacts with RCC2. Interacts preferentially with nucleotide-free and GDP-bound RAC1. Interacts with VIM (via head domain). Isoform 1 and isoform 2 appear as homotrimers, while isoform 3 seems to exist as monomers. Interacts with MICAL2; this interaction recruits MICAL2 to the actin filaments. Ubiquitous.

The protein resides in the cell membrane. It localises to the cell projection. It is found in the lamellipodium. Its subcellular location is the ruffle membrane. The protein localises to the cytoplasm. The protein resides in the cytoskeleton. It localises to the cell cortex. It is found in the endosome membrane. Its subcellular location is the sarcolemma. The protein localises to the myofibril. The protein resides in the sarcomere. It localises to the synapse. Functionally, plays a role in directed cell migration by regulating the activation and subcellular location of RAC1. Increases the presence of activated RAC1 at the leading edge of migrating cells. Required for normal organization of the cytoskeleton, including the actin cytoskeleton, microtubules and the vimentin intermediate filaments. Plays a role in endoplasmic reticulum-associated endosome fission: localizes to endosome membrane tubules and promotes recruitment of TMCC1, leading to recruitment of the endoplasmic reticulum to endosome tubules for fission. Endosome membrane fission of early and late endosomes is essential to separate regions destined for lysosomal degradation from carriers to be recycled to the plasma membrane. Required for normal cell proliferation, cell migration, and normal formation of lamellipodia. Required for normal distribution of mitochondria within cells. Involved in myogenic differentiation. The polypeptide is Coronin-1C (Homo sapiens (Human)).